The chain runs to 110 residues: MSVVIRLARAGTKKRPVYHVVVADSRFPRDGRFIERLGYFNPLMPKDNEARLKLDMEKVKGWLAKGAQPSDRVARFLDAAGVKKREARQNPIKAVPRKERKAQAEAAAKG.

The segment at 87 to 110 is disordered; that stretch reads ARQNPIKAVPRKERKAQAEAAAKG.

This sequence belongs to the bacterial ribosomal protein bS16 family.

In Bradyrhizobium sp. (strain BTAi1 / ATCC BAA-1182), this protein is Small ribosomal subunit protein bS16.